Consider the following 410-residue polypeptide: Argininosuccinate synthase (410 aa).

8–16 is a binding site for ATP; sequence AYSGGLDTS. Tyr86 is a binding site for L-citrulline. Position 116 (Gly116) interacts with ATP. L-aspartate-binding residues include Thr118, Asn122, and Asp123. L-citrulline is bound at residue Asn122. 4 residues coordinate L-citrulline: Arg126, Ser174, Glu259, and Tyr271.

Belongs to the argininosuccinate synthase family. Type 1 subfamily. In terms of assembly, homotetramer.

It localises to the cytoplasm. It carries out the reaction L-citrulline + L-aspartate + ATP = 2-(N(omega)-L-arginino)succinate + AMP + diphosphate + H(+). It functions in the pathway amino-acid biosynthesis; L-arginine biosynthesis; L-arginine from L-ornithine and carbamoyl phosphate: step 2/3. The protein is Argininosuccinate synthase of Leuconostoc citreum (strain KM20).